The chain runs to 205 residues: Proteasome subunit beta type-3 (205 aa).

Residue serine 2 is modified to N-acetylserine. Lysine 77 carries the N6-acetyllysine modification.

It belongs to the peptidase T1B family. In terms of assembly, the 26S proteasome consists of a 20S proteasome core and two 19S regulatory subunits. The 20S proteasome core is a barrel-shaped complex made of 28 subunits that are arranged in four stacked rings. The two outer rings are each formed by seven alpha subunits, and the two inner rings are formed by seven beta subunits. The proteolytic activity is exerted by three beta-subunits PSMB5, PSMB6 and PSMB7. As to quaternary structure, (Microbial infection) Interacts with HIV-1 TAT protein.

It is found in the cytoplasm. The protein resides in the nucleus. Functionally, non-catalytic component of the 20S core proteasome complex involved in the proteolytic degradation of most intracellular proteins. This complex plays numerous essential roles within the cell by associating with different regulatory particles. Associated with two 19S regulatory particles, forms the 26S proteasome and thus participates in the ATP-dependent degradation of ubiquitinated proteins. The 26S proteasome plays a key role in the maintenance of protein homeostasis by removing misfolded or damaged proteins that could impair cellular functions, and by removing proteins whose functions are no longer required. Associated with the PA200 or PA28, the 20S proteasome mediates ubiquitin-independent protein degradation. This type of proteolysis is required in several pathways including spermatogenesis (20S-PA200 complex) or generation of a subset of MHC class I-presented antigenic peptides (20S-PA28 complex). The polypeptide is Proteasome subunit beta type-3 (Homo sapiens (Human)).